A 344-amino-acid chain; its full sequence is Uroporphyrinogen decarboxylase (344 aa).

Residues 26–30, Asp-76, Tyr-152, Ser-207, and His-323 contribute to the substrate site; that span reads RQAGR.

It belongs to the uroporphyrinogen decarboxylase family. In terms of assembly, homodimer.

It is found in the cytoplasm. The catalysed reaction is uroporphyrinogen III + 4 H(+) = coproporphyrinogen III + 4 CO2. It functions in the pathway porphyrin-containing compound metabolism; protoporphyrin-IX biosynthesis; coproporphyrinogen-III from 5-aminolevulinate: step 4/4. Functionally, catalyzes the decarboxylation of four acetate groups of uroporphyrinogen-III to yield coproporphyrinogen-III. This Hyphomonas neptunium (strain ATCC 15444) protein is Uroporphyrinogen decarboxylase.